The chain runs to 120 residues: Glycine cleavage system H protein (120 aa).

The Lipoyl-binding domain occupies 20 to 102 (DGTVGISDHA…YEGGWLFKLD (83 aa)). Residue Lys61 is modified to N6-lipoyllysine.

Belongs to the GcvH family. As to quaternary structure, the glycine cleavage system is composed of four proteins: P, T, L and H. (R)-lipoate is required as a cofactor.

Functionally, the glycine cleavage system catalyzes the degradation of glycine. The H protein shuttles the methylamine group of glycine from the P protein to the T protein. The chain is Glycine cleavage system H protein from Deinococcus radiodurans (strain ATCC 13939 / DSM 20539 / JCM 16871 / CCUG 27074 / LMG 4051 / NBRC 15346 / NCIMB 9279 / VKM B-1422 / R1).